We begin with the raw amino-acid sequence, 333 residues long: Phosphate acyltransferase (333 aa).

Belongs to the PlsX family. As to quaternary structure, homodimer. Probably interacts with PlsY.

It is found in the cytoplasm. The enzyme catalyses a fatty acyl-[ACP] + phosphate = an acyl phosphate + holo-[ACP]. It functions in the pathway lipid metabolism; phospholipid metabolism. Catalyzes the reversible formation of acyl-phosphate (acyl-PO(4)) from acyl-[acyl-carrier-protein] (acyl-ACP). This enzyme utilizes acyl-ACP as fatty acyl donor, but not acyl-CoA. The polypeptide is Phosphate acyltransferase (Helicobacter hepaticus (strain ATCC 51449 / 3B1)).